Reading from the N-terminus, the 30-residue chain is GTPCGESCVYIPCISGVIGCSCTDKVCYLN.

Positions 1–30 (GTPCGESCVYIPCISGVIGCSCTDKVCYLN) form a cross-link, cyclopeptide (Gly-Asn). 3 disulfides stabilise this stretch: cysteine 4–cysteine 20, cysteine 8–cysteine 22, and cysteine 13–cysteine 27.

This is a cyclic peptide.

Its function is as follows. Probably participates in a plant defense mechanism. The protein is Kalata-B5 of Oldenlandia affinis.